The following is a 137-amino-acid chain: Holo-[acyl-carrier-protein] synthase (137 aa).

Mg(2+) contacts are provided by Asp8 and Glu57.

The protein belongs to the P-Pant transferase superfamily. AcpS family. Mg(2+) serves as cofactor.

The protein resides in the cytoplasm. It carries out the reaction apo-[ACP] + CoA = holo-[ACP] + adenosine 3',5'-bisphosphate + H(+). In terms of biological role, transfers the 4'-phosphopantetheine moiety from coenzyme A to a Ser of acyl-carrier-protein. The sequence is that of Holo-[acyl-carrier-protein] synthase from Cereibacter sphaeroides (strain ATCC 17029 / ATH 2.4.9) (Rhodobacter sphaeroides).